Reading from the N-terminus, the 92-residue chain is MARSVWKGPFVDGYLFGKAEASRASGRNEVIKIWSRRSTILPQFVGLTFGVYNGHKFLPVQVTENMVGHKFGEFSPTRTYTGHGSDKKSKRG.

Residues 72 to 92 form a disordered region; sequence GEFSPTRTYTGHGSDKKSKRG.

This sequence belongs to the universal ribosomal protein uS19 family.

Protein S19 forms a complex with S13 that binds strongly to the 16S ribosomal RNA. This is Small ribosomal subunit protein uS19 from Gluconobacter oxydans (strain 621H) (Gluconobacter suboxydans).